A 160-amino-acid polypeptide reads, in one-letter code: Ribosomal RNA large subunit methyltransferase H (160 aa).

S-adenosyl-L-methionine is bound by residues L76, G108, and 127–132 (LGKMTW).

It belongs to the RNA methyltransferase RlmH family. As to quaternary structure, homodimer.

The protein localises to the cytoplasm. The enzyme catalyses pseudouridine(1915) in 23S rRNA + S-adenosyl-L-methionine = N(3)-methylpseudouridine(1915) in 23S rRNA + S-adenosyl-L-homocysteine + H(+). Specifically methylates the pseudouridine at position 1915 (m3Psi1915) in 23S rRNA. In Rhizobium rhizogenes (strain K84 / ATCC BAA-868) (Agrobacterium radiobacter), this protein is Ribosomal RNA large subunit methyltransferase H.